Consider the following 70-residue polypeptide: DNA-directed RNA polymerase subunit epsilon (70 aa).

It belongs to the RNA polymerase subunit epsilon family. RNAP is composed of a core of 2 alpha, a beta and a beta' subunit. The core is associated with a delta subunit, and at least one of epsilon or omega. When a sigma factor is associated with the core the holoenzyme is formed, which can initiate transcription.

It carries out the reaction RNA(n) + a ribonucleoside 5'-triphosphate = RNA(n+1) + diphosphate. A non-essential component of RNA polymerase (RNAP). The sequence is that of DNA-directed RNA polymerase subunit epsilon from Bacillus cereus (strain Q1).